A 513-amino-acid polypeptide reads, in one-letter code: 2,3-bisphosphoglycerate-independent phosphoglycerate mutase (513 aa).

2 residues coordinate Mn(2+): aspartate 13 and serine 63. Serine 63 functions as the Phosphoserine intermediate in the catalytic mechanism. Substrate contacts are provided by residues histidine 124, 154–155 (RD), arginine 186, arginine 192, 262–265 (RADR), and lysine 335. The Mn(2+) site is built by aspartate 402, histidine 406, aspartate 443, histidine 444, and histidine 462.

It belongs to the BPG-independent phosphoglycerate mutase family. Monomer. Mn(2+) serves as cofactor.

The catalysed reaction is (2R)-2-phosphoglycerate = (2R)-3-phosphoglycerate. Its pathway is carbohydrate degradation; glycolysis; pyruvate from D-glyceraldehyde 3-phosphate: step 3/5. In terms of biological role, catalyzes the interconversion of 2-phosphoglycerate and 3-phosphoglycerate. The chain is 2,3-bisphosphoglycerate-independent phosphoglycerate mutase from Shewanella amazonensis (strain ATCC BAA-1098 / SB2B).